Reading from the N-terminus, the 601-residue chain is Terpinolene synthase, chloroplastic (601 aa).

A chloroplast-targeting transit peptide spans 1 to 32; that stretch reads MSTFVISNSMHVGISFSFLHKLPQTPPPQVVC. Residues Asp354, Asp358, Asp498, Thr502, and Glu506 each contribute to the Mg(2+) site. The DDXXD motif motif lies at 354 to 358; that stretch reads DDVYD.

Belongs to the terpene synthase family. Tpsd subfamily. It depends on Mg(2+) as a cofactor. Mn(2+) serves as cofactor.

It is found in the plastid. Its subcellular location is the chloroplast. It catalyses the reaction (2E)-geranyl diphosphate = terpinolene + diphosphate. The protein operates within secondary metabolite biosynthesis; terpenoid biosynthesis. Functionally, monoterpene synthase that catalyzes the formation of terpinolene and other monoterpenes from geranyl diphosphate. The chain is Terpinolene synthase, chloroplastic (TES) from Ocimum basilicum (Sweet basil).